Here is a 20-residue protein sequence, read N- to C-terminus: Malate dehydrogenase (20 aa).

11–17 (GAAGQIG) is an NAD(+) binding site.

It belongs to the LDH/MDH superfamily. MDH type 2 family.

The catalysed reaction is (S)-malate + NAD(+) = oxaloacetate + NADH + H(+). In terms of biological role, catalyzes the reversible oxidation of malate to oxaloacetate. This Kibdelosporangium aridum protein is Malate dehydrogenase (mdh).